Consider the following 1155-residue polypeptide: DNA-directed RNA polymerase subunit beta (1155 aa).

It belongs to the RNA polymerase beta chain family. In terms of assembly, the RNAP catalytic core consists of 2 alpha, 1 beta, 1 beta' and 1 omega subunit. When a sigma factor is associated with the core the holoenzyme is formed, which can initiate transcription.

The enzyme catalyses RNA(n) + a ribonucleoside 5'-triphosphate = RNA(n+1) + diphosphate. In terms of biological role, DNA-dependent RNA polymerase catalyzes the transcription of DNA into RNA using the four ribonucleoside triphosphates as substrates. The polypeptide is DNA-directed RNA polymerase subunit beta (Borreliella burgdorferi (strain ZS7) (Borrelia burgdorferi)).